A 251-amino-acid polypeptide reads, in one-letter code: 2,3-bisphosphoglycerate-dependent phosphoglycerate mutase (251 aa).

Substrate contacts are provided by residues 13 to 20 (RHGESEWN), 26 to 27 (TG), R65, 92 to 95 (ERHY), K103, 119 to 120 (RR), and 186 to 187 (GN). H14 serves as the catalytic Tele-phosphohistidine intermediate. E92 (proton donor/acceptor) is an active-site residue.

Belongs to the phosphoglycerate mutase family. BPG-dependent PGAM subfamily.

The enzyme catalyses (2R)-2-phosphoglycerate = (2R)-3-phosphoglycerate. The protein operates within carbohydrate degradation; glycolysis; pyruvate from D-glyceraldehyde 3-phosphate: step 3/5. Catalyzes the interconversion of 2-phosphoglycerate and 3-phosphoglycerate. This Rhodococcus opacus (strain B4) protein is 2,3-bisphosphoglycerate-dependent phosphoglycerate mutase.